Reading from the N-terminus, the 328-residue chain is 3-dehydroquinate synthase (328 aa).

The protein belongs to the archaeal-type DHQ synthase family.

It catalyses the reaction 2-amino-2,3,7-trideoxy-D-lyxo-hept-6-ulosonate + NAD(+) + H2O = 3-dehydroquinate + NH4(+) + NADH + H(+). Catalyzes the oxidative deamination and cyclization of 2-amino-3,7-dideoxy-D-threo-hept-6-ulosonic acid (ADH) to yield 3-dehydroquinate (DHQ), which is fed into the canonical shikimic pathway of aromatic amino acid biosynthesis. The chain is 3-dehydroquinate synthase from Methanospirillum hungatei JF-1 (strain ATCC 27890 / DSM 864 / NBRC 100397 / JF-1).